A 216-amino-acid polypeptide reads, in one-letter code: Cytochrome c biogenesis ATP-binding export protein CcmA (216 aa).

An ABC transporter domain is found at 11-216 (LSANELTCIR…RKITLDYRFV (206 aa)). Residue 43–50 (GPNGAGKT) participates in ATP binding.

It belongs to the ABC transporter superfamily. CcmA exporter (TC 3.A.1.107) family. The complex is composed of two ATP-binding proteins (CcmA) and two transmembrane proteins (CcmB).

Its subcellular location is the cell inner membrane. It carries out the reaction heme b(in) + ATP + H2O = heme b(out) + ADP + phosphate + H(+). Its function is as follows. Part of the ABC transporter complex CcmAB involved in the biogenesis of c-type cytochromes; once thought to export heme, this seems not to be the case, but its exact role is uncertain. Responsible for energy coupling to the transport system. This is Cytochrome c biogenesis ATP-binding export protein CcmA from Shewanella frigidimarina (strain NCIMB 400).